The primary structure comprises 185 residues: Protein-lysine palmitoyltransferase CyaC (185 aa).

Catalysis depends on residues His-33 and Asp-102.

The protein belongs to the RTX toxin acyltransferase family. In terms of assembly, homodimer.

It localises to the cytoplasm. It carries out the reaction hexadecanoyl-[ACP] + L-lysyl-[protein] = N(6)-hexadecanoyl-L-lysyl-[protein] + holo-[ACP] + H(+). It catalyses the reaction (9Z)-hexadecenoyl-[ACP] + L-lysyl-[protein] = N(6)-[(9Z)-hexadecenoyl]-L-lysyl-[protein] + holo-[ACP] + H(+). In terms of biological role, protein-lysine palmitoyltransferase that catalyzes palmitoylation of the protoxin (CyaA) at two internal lysine residues, thereby converting it to the active toxin. This Bordetella bronchiseptica (strain ATCC BAA-588 / NCTC 13252 / RB50) (Alcaligenes bronchisepticus) protein is Protein-lysine palmitoyltransferase CyaC.